Reading from the N-terminus, the 383-residue chain is S-adenosylmethionine synthase (383 aa).

Residue histidine 15 participates in ATP binding. Aspartate 17 is a binding site for Mg(2+). K(+) is bound at residue glutamate 43. Positions 56 and 99 each coordinate L-methionine. The segment at 99-109 is flexible loop; the sequence is QSPDINQGVDR. ATP is bound by residues 164 to 166, 230 to 231, aspartate 239, 245 to 246, alanine 262, and lysine 266; these read DAK, RF, and RK. Aspartate 239 is an L-methionine binding site. Lysine 270 contributes to the L-methionine binding site.

This sequence belongs to the AdoMet synthase family. As to quaternary structure, homotetramer; dimer of dimers. It depends on Mg(2+) as a cofactor. K(+) serves as cofactor.

The protein localises to the cytoplasm. It carries out the reaction L-methionine + ATP + H2O = S-adenosyl-L-methionine + phosphate + diphosphate. It functions in the pathway amino-acid biosynthesis; S-adenosyl-L-methionine biosynthesis; S-adenosyl-L-methionine from L-methionine: step 1/1. Catalyzes the formation of S-adenosylmethionine (AdoMet) from methionine and ATP. The overall synthetic reaction is composed of two sequential steps, AdoMet formation and the subsequent tripolyphosphate hydrolysis which occurs prior to release of AdoMet from the enzyme. This is S-adenosylmethionine synthase from Shewanella sp. (strain ANA-3).